We begin with the raw amino-acid sequence, 463 residues long: MEITPARGGLNRAHLQCRNLQEFLGGLSPGVLDRLYGHPATCLAVFRELPSLAKNWVMRMLFLEQPLPQAAVALWVKKEFSKAQEESTGLLSGLRIWHTQLLPGGLQGLILNPVFRQNLRIALLGGGKAWSDDTSQLGPDKHARDVPSLDKYAEERWEVVLHFMVGSPSAAVSQDLAQLLSQAGLMKSTEPGEPPCITSAGFQFLLLDTPAQLWYFMLQYLQTAQSRGMDLVEILSFLFQLSFSTLGKDYSVEGMSDSLLNFLQHLREFGLVFQRKRKSRRYYPTRLAINLSSGVSGAGGTVHQPGFIVVETNYRLYAYTESELQIALIALFSEMLYRFPNMVVAQVTRESVQQAIASGITAQQIIHFLRTRAHPVMLKQNPVLPPTITDQIRLWELERDRLRFTEGVLYNQFLSQVDFELLLAHARELGVLVFENSAKRLMVVTPAGHSDVKRFWKRQKHSS.

The protein belongs to the TFB2 family. As to quaternary structure, component of the 7-subunit TFIIH core complex composed of XPB/ERCC3, XPD/ERCC2, GTF2H1, GTF2H2, GTF2H3, GTF2H4 and GTF2H5, which is active in NER. The core complex associates with the 3-subunit CDK-activating kinase (CAK) module composed of CCNH/cyclin H, CDK7 and MNAT1 to form the 10-subunit holoenzyme (holo-TFIIH) active in transcription. Part of TBP-based Pol II pre-initiation complex (PIC), in which Pol II core assembles with general transcription factors and other specific initiation factors including GTF2E1, GTF2E2, GTF2F1, GTF2F2, TCEA1, ERCC2, ERCC3, GTF2H2, GTF2H3, GTF2H4, GTF2H5, GTF2A1, GTF2A2, GTF2B and TBP; this large multi-subunit PIC complex mediates DNA unwinding and targets Pol II core to the transcription start site where the first phosphodiester bond forms.

It localises to the nucleus. Component of the general transcription and DNA repair factor IIH (TFIIH) core complex, which is involved in general and transcription-coupled nucleotide excision repair (NER) of damaged DNA and, when complexed to CAK, in RNA transcription by RNA polymerase II. In NER, TFIIH acts by opening DNA around the lesion to allow the excision of the damaged oligonucleotide and its replacement by a new DNA fragment. In transcription, TFIIH has an essential role in transcription initiation. When the pre-initiation complex (PIC) has been established, TFIIH is required for promoter opening and promoter escape. Phosphorylation of the C-terminal tail (CTD) of the largest subunit of RNA polymerase II by the kinase module CAK controls the initiation of transcription. This Mus musculus (Mouse) protein is General transcription factor IIH subunit 4 (Gtf2h4).